Reading from the N-terminus, the 298-residue chain is ATP synthase gamma chain (298 aa).

The protein belongs to the ATPase gamma chain family. F-type ATPases have 2 components, CF(1) - the catalytic core - and CF(0) - the membrane proton channel. CF(1) has five subunits: alpha(3), beta(3), gamma(1), delta(1), epsilon(1). CF(0) has three main subunits: a, b and c.

Its subcellular location is the cell inner membrane. Produces ATP from ADP in the presence of a proton gradient across the membrane. The gamma chain is believed to be important in regulating ATPase activity and the flow of protons through the CF(0) complex. The sequence is that of ATP synthase gamma chain from Granulibacter bethesdensis (strain ATCC BAA-1260 / CGDNIH1).